Here is a 275-residue protein sequence, read N- to C-terminus: Nurim (275 aa).

Over 1–4 (MASV) the chain is Nuclear. Residues 5–32 (TFRDGFLCVSALITFVFVFVTGADFVRF) form a helical membrane-spanning segment. Over 33–63 (VSFRAINHNLSGAAPLCRDSVPWSVALRDGV) the chain is Perinuclear space. Residues 64–85 (VQKAVAVDVLLLVVFSLQHSLL) form a helical membrane-spanning segment. Topologically, residues 86 to 102 (AWTPVKRVCQSVFGVLS) are nuclear. Residues 103-119 (RSVYCFTTAAALQILMH) form a helical membrane-spanning segment. Residues 120-138 (YWRPVTSAPCLWSVSSAPW) lie on the Perinuclear space side of the membrane. A helical transmembrane segment spans residues 139 to 169 (EIWFPLICFIVHFLCWAIICSILLIFDYPEL). The Nuclear portion of the chain corresponds to 170–196 (LGIKQVYYECLGLGDPLLLKSERAQRL). The chain crosses the membrane as a helical span at residues 197-215 (YSHLRHPVCVELLTVLWLL). Over 216–221 (PSFPLD) the chain is Perinuclear space. A helical transmembrane segment spans residues 222–239 (RLLLAVFLTVYLILAHSL). Topologically, residues 240–275 (DKQDCAYLRHQLRNKLQLFSTPLEGSEQTNDNNKLE) are nuclear.

This sequence belongs to the nurim family.

The protein resides in the nucleus inner membrane. The sequence is that of Nurim (nrm) from Danio rerio (Zebrafish).